A 153-amino-acid chain; its full sequence is MKLNELYNNIGAKKNKKRIARGIGSGKGKTGGRGIKGQKSRSGVAVKGFEGGQTPMIKRLPKRGFNCISTKKYNIINIYNIEEALADGRLSADDNITKEKLVEARVVNNKNNKKLVKLLSICSDDFAAPLSLKLDAYSSKAKDLIEKAGGKLL.

Residues 21-42 (RGIGSGKGKTGGRGIKGQKSRS) are disordered. Gly residues predominate over residues 23-35 (IGSGKGKTGGRGI).

The protein belongs to the universal ribosomal protein uL15 family. Part of the 50S ribosomal subunit.

Functionally, binds to the 23S rRNA. In Rickettsia peacockii (strain Rustic), this protein is Large ribosomal subunit protein uL15.